The following is a 188-amino-acid chain: FUN14 domain-containing protein 1B (188 aa).

A helical membrane pass occupies residues 21–41 (VVNIDGNIFSIYVCFFVCFFF). A YXXL motif is present at residues 52 to 55 (YEVL). The next 3 membrane-spanning stretches (helical) occupy residues 82-102 (YSVA…GFLF), 109-129 (AATA…GGYI), and 167-187 (FFKK…IGLA).

It belongs to the FUN14 family.

It localises to the mitochondrion outer membrane. Functionally, acts as an activator of hypoxia-induced mitophagy, an important mechanism for mitochondrial quality control. This Xenopus laevis (African clawed frog) protein is FUN14 domain-containing protein 1B (fundc1-b).